A 510-amino-acid polypeptide reads, in one-letter code: Sulfoquinovosyl transferase SQD2 (510 aa).

The N-terminal 83 residues, 1 to 83 (MTTLSSINLS…SNDMTITQVR (83 aa)), are a transit peptide targeting the chloroplast. Ser-88 carries the post-translational modification Phosphoserine. Residues 198-218 (PGVMVFGALAIAKMLSVPIVM) traverse the membrane as a helical segment.

This sequence belongs to the glycosyltransferase group 1 family. Glycosyltransferase 4 subfamily.

Its subcellular location is the plastid. The protein localises to the chloroplast membrane. The catalysed reaction is UDP-alpha-D-6-sulfoquinovose + a 1,2-diacyl-sn-glycerol = a 6-sulfo-alpha-D-quinovosyldiacylglycerol + UDP + H(+). It participates in glycolipid biosynthesis. Catalyzes the transfer of the sulfoquinovose moiety from UDP-sulfoquinovose to diacylglycerol during sulfolipid biosynthesis. Sulfolipid contributes to maintaining a negatively charged lipid-water interface, a requirement for proper function of photosynthetic membranes. Sulfolipid may also function as a substitute of anionic phospholipids under phosphate-limited growth conditions. The polypeptide is Sulfoquinovosyl transferase SQD2 (Arabidopsis thaliana (Mouse-ear cress)).